The chain runs to 206 residues: Large ribosomal subunit protein uL4 (206 aa).

The tract at residues 47–79 (GTKGQKNRSAVRGGGAKPWAQKGSGRARAGTSR) is disordered. Low complexity predominate over residues 69–79 (GSGRARAGTSR).

It belongs to the universal ribosomal protein uL4 family. Part of the 50S ribosomal subunit.

One of the primary rRNA binding proteins, this protein initially binds near the 5'-end of the 23S rRNA. It is important during the early stages of 50S assembly. It makes multiple contacts with different domains of the 23S rRNA in the assembled 50S subunit and ribosome. In terms of biological role, forms part of the polypeptide exit tunnel. In Hydrogenovibrio crunogenus (strain DSM 25203 / XCL-2) (Thiomicrospira crunogena), this protein is Large ribosomal subunit protein uL4.